The primary structure comprises 225 residues: UPF0758 protein Bpet3149 (225 aa).

The MPN domain maps to 103–225 (AMSEPGSVKR…VVSMAELGLL (123 aa)). Positions 174, 176, and 187 each coordinate Zn(2+). A JAMM motif motif is present at residues 174–187 (HNHPSGSAQPSQAD).

Belongs to the UPF0758 family.

This Bordetella petrii (strain ATCC BAA-461 / DSM 12804 / CCUG 43448) protein is UPF0758 protein Bpet3149.